The primary structure comprises 476 residues: Siroheme synthase (476 aa).

Positions 1 to 203 (MNYFPVFADL…RQIEAAKKEL (203 aa)) are precorrin-2 dehydrogenase /sirohydrochlorin ferrochelatase. Residues 22-23 (TI) and 43-44 (QK) each bind NAD(+). Ser-128 is subject to Phosphoserine. The interval 214-476 (GSVSLVGAGP…LDSLRIERVA (263 aa)) is uroporphyrinogen-III C-methyltransferase. S-adenosyl-L-methionine is bound at residue Pro-223. Asp-246 acts as the Proton acceptor in catalysis. Lys-268 functions as the Proton donor in the catalytic mechanism. S-adenosyl-L-methionine contacts are provided by residues 299–301 (GGD), Val-304, 329–330 (TA), Met-381, and Gly-410.

In the N-terminal section; belongs to the precorrin-2 dehydrogenase / sirohydrochlorin ferrochelatase family. This sequence in the C-terminal section; belongs to the precorrin methyltransferase family.

The catalysed reaction is uroporphyrinogen III + 2 S-adenosyl-L-methionine = precorrin-2 + 2 S-adenosyl-L-homocysteine + H(+). It catalyses the reaction precorrin-2 + NAD(+) = sirohydrochlorin + NADH + 2 H(+). It carries out the reaction siroheme + 2 H(+) = sirohydrochlorin + Fe(2+). It participates in cofactor biosynthesis; adenosylcobalamin biosynthesis; precorrin-2 from uroporphyrinogen III: step 1/1. The protein operates within cofactor biosynthesis; adenosylcobalamin biosynthesis; sirohydrochlorin from precorrin-2: step 1/1. Its pathway is porphyrin-containing compound metabolism; siroheme biosynthesis; precorrin-2 from uroporphyrinogen III: step 1/1. It functions in the pathway porphyrin-containing compound metabolism; siroheme biosynthesis; siroheme from sirohydrochlorin: step 1/1. It participates in porphyrin-containing compound metabolism; siroheme biosynthesis; sirohydrochlorin from precorrin-2: step 1/1. Its function is as follows. Multifunctional enzyme that catalyzes the SAM-dependent methylations of uroporphyrinogen III at position C-2 and C-7 to form precorrin-2 via precorrin-1. Then it catalyzes the NAD-dependent ring dehydrogenation of precorrin-2 to yield sirohydrochlorin. Finally, it catalyzes the ferrochelation of sirohydrochlorin to yield siroheme. This chain is Siroheme synthase, found in Mannheimia succiniciproducens (strain KCTC 0769BP / MBEL55E).